The chain runs to 147 residues: 3-dehydroquinate dehydratase (147 aa).

Residue Y24 is the Proton acceptor of the active site. Residues N75, H81, and D88 each contribute to the substrate site. H101 (proton donor) is an active-site residue. Residues I102–S103 and R112 each bind substrate.

Belongs to the type-II 3-dehydroquinase family. Homododecamer.

The enzyme catalyses 3-dehydroquinate = 3-dehydroshikimate + H2O. It participates in metabolic intermediate biosynthesis; chorismate biosynthesis; chorismate from D-erythrose 4-phosphate and phosphoenolpyruvate: step 3/7. In terms of biological role, catalyzes a trans-dehydration via an enolate intermediate. The sequence is that of 3-dehydroquinate dehydratase from Cereibacter sphaeroides (strain ATCC 17029 / ATH 2.4.9) (Rhodobacter sphaeroides).